The primary structure comprises 1126 residues: Formin-B (1126 aa).

The disordered stretch occupies residues 1–21 (MFFKGKKKDKEKEKSHGNIGN). Positions 38–406 (EQNLSNEDLK…LILKDPSKES (369 aa)) constitute a GBD/FH3 domain. Low complexity predominate over residues 427–447 (LNNSNNNNNNNNSNNNNNDSN). Positions 427-462 (LNNSNNNNNNNNSNNNNNDSNVSTPNINTGSPLLPP) are disordered. Polar residues predominate over residues 448-462 (VSTPNINTGSPLLPP). Residues 463 to 514 (QQYQDLEQKLQLTQNEKNESQNKVKQLESEIKGLNSTLTGLQLKVTKLEADL) are a coiled coil. Residues 518 to 532 (SVTTPPSDTNGTTSP) show a composition bias toward polar residues. Disordered regions lie at residues 518 to 619 (SVTT…SVPS) and 1004 to 1078 (ARKK…QNGT). In terms of domain architecture, FH1 spans 527-611 (NGTTSPPIEA…PGAPAVPNLP (85 aa)). Pro residues predominate over residues 543 to 597 (GAPPPPPPPPPAPPVSGGGPPPPPPPPPPSSGGGPPPPPPPPSSGGPPPPPPPPG). 3 stretches are compositionally biased toward low complexity: residues 598 to 607 (GMKKPGAPAV), 1009 to 1022 (AASGPSVPSASGSS), and 1032 to 1064 (SPITPTSKSSISISQKPPQSTQPSISVQQQQQQ). In terms of domain architecture, FH2 spans 612-1011 (PKKSSVPSVK…LAARKKAAAS (400 aa)). A coiled-coil region spans residues 980–1010 (KFKNEFKRTIESIQKERENVQKLAARKKAAA). The 30-residue stretch at 1071-1100 (DDIPQNGTFMDQLMSKMKGGEAIRASRRAS) folds into the DAD domain.

Belongs to the formin homology family. Diaphanous subfamily. As to quaternary structure, interacts (via GBD/FH3 domain) with activated Rho-GTPases. Interacts with pfyA and pfyB.

Its function is as follows. Formins play an important role in the nucleation of actin and the formation of linear actin filaments. The protein is Formin-B (forB) of Dictyostelium discoideum (Social amoeba).